Consider the following 347-residue polypeptide: Very-long-chain 3-oxoacyl-CoA reductase (347 aa).

A helical membrane pass occupies residues 22 to 42 (LLWSIFGFGVLKATTLILRIM). V68, D122, N149, Y223, K227, V256, and S258 together coordinate NADP(+). Residue Y223 is the Proton donor of the active site. Residue K227 is the Lowers pKa of active site Tyr of the active site.

The protein belongs to the short-chain dehydrogenases/reductases (SDR) family.

The protein resides in the endoplasmic reticulum membrane. The catalysed reaction is a very-long-chain (3R)-3-hydroxyacyl-CoA + NADP(+) = a very-long-chain 3-oxoacyl-CoA + NADPH + H(+). It functions in the pathway lipid metabolism; fatty acid biosynthesis. Functionally, component of the microsomal membrane bound fatty acid elongation system, which produces the 26-carbon very long-chain fatty acids (VLCFA) from palmitate. Catalyzes the reduction of the 3-ketoacyl-CoA intermediate that is formed in each cycle of fatty acid elongation. VLCFAs serve as precursors for ceramide and sphingolipids. The chain is Very-long-chain 3-oxoacyl-CoA reductase from Vanderwaltozyma polyspora (strain ATCC 22028 / DSM 70294 / BCRC 21397 / CBS 2163 / NBRC 10782 / NRRL Y-8283 / UCD 57-17) (Kluyveromyces polysporus).